Consider the following 360-residue polypeptide: AA9 family lytic polysaccharide monooxygenase A (360 aa).

Residues 1–19 form the signal peptide; it reads MKTSFGLLALAAAAKLVNA. H20 and H102 together coordinate Cu(2+). C62 and C183 are oxidised to a cystine. H169 contributes to the O2 binding site. Y180 is a Cu(2+) binding site. Positions 254–293 are disordered; the sequence is TSAASASSTKAPATTAAPVQTESAKPATSTTQAAAPTTLV. The CBM1 domain maps to 322–358; it reads GVVKMYAQCGGMNYSGSTTCESGLTCKQWNPYYHQCV. N-linked (GlcNAc...) asparagine glycosylation is present at N334.

This sequence belongs to the polysaccharide monooxygenase AA9 family. Cu(2+) is required as a cofactor.

The protein localises to the secreted. It catalyses the reaction [(1-&gt;4)-beta-D-glucosyl]n+m + reduced acceptor + O2 = 4-dehydro-beta-D-glucosyl-[(1-&gt;4)-beta-D-glucosyl]n-1 + [(1-&gt;4)-beta-D-glucosyl]m + acceptor + H2O.. Its function is as follows. Lytic polysaccharide monooxygenase (LPMO) that depolymerizes crystalline and amorphous polysaccharides via the oxidation of scissile alpha- or beta-(1-4)-glycosidic bonds, yielding C4 oxidation products. Catalysis by LPMOs requires the reduction of the active-site copper from Cu(II) to Cu(I) by a reducing agent and H(2)O(2) or O(2) as a cosubstrate. This Aspergillus terreus (strain NIH 2624 / FGSC A1156) protein is AA9 family lytic polysaccharide monooxygenase A (eglD).